Reading from the N-terminus, the 284-residue chain is F-box protein PP2-B5 (284 aa).

In terms of domain architecture, F-box spans 32–80; the sequence is ASFDDLPDDCLAIISSFTSTPRDAFLAALVSKSFGLQFNSDSVWEKFLP.

In Arabidopsis thaliana (Mouse-ear cress), this protein is F-box protein PP2-B5 (PP2B5).